The chain runs to 319 residues: Probable casein kinase II subunit alpha homolog (319 aa).

The Protein kinase domain maps to 37–316; sequence YQIYQRMGRG…ADECLRHPLF (280 aa). ATP-binding positions include 43–51 and K64; that span reads MGRGKYSEV. D151 functions as the Proton acceptor in the catalytic mechanism.

It belongs to the protein kinase superfamily. Ser/Thr protein kinase family. CK2 subfamily. As to quaternary structure, tetramer composed of two alpha chains, one beta chain and one beta' chain.

The catalysed reaction is L-seryl-[protein] + ATP = O-phospho-L-seryl-[protein] + ADP + H(+). The enzyme catalyses L-threonyl-[protein] + ATP = O-phospho-L-threonyl-[protein] + ADP + H(+). Its function is as follows. Catalytic subunit of a constitutively active serine/threonine-protein kinase complex that phosphorylates a large number of substrates containing acidic residues C-terminal to the phosphorylated serine or threonine. This is Probable casein kinase II subunit alpha homolog (CKA1) from Encephalitozoon cuniculi (strain GB-M1) (Microsporidian parasite).